The chain runs to 469 residues: MSFRLSSGSRRLCSPAGSGQLTGGRTGFRAGNACGGLGAGSSFSGPLGSVSSRGSFSHGGGGLGSGVCTGFLENEHGLLPGNEKVTLQNLNDRLASYLDHVCTLEEANADLEQKIKGWYEKYGPGSGRQLAYDCSKYFSVTEDLKRQIISVTTCNASIALQNENARLTADDFRLKYENELALNQSVEADINGLHRVMEELTLCTSDLEIQCEALSEELTCLKKNHQEEMKVMQGAAGGNVNVEINAAPGVDLTVLLNNMRAEYEDLAEQNREDAEAWFNEKSTSLHQQISDDAGAATAARNELMELKRNLQTLEIELQSLMAMKHSYECSLAETESNYCHQLQQIQEQIGATEDQLQQIRMETEGQKLEHERLLDVKIFLEKEIEMYCKLIDGEGRKSKSTYCKSEGRGPKNSENQVKDSKEEAVVKTVVGELDQLGSVLSLRVHSVEEKSSKISNITMEQRLPSKVPQ.

Positions 1–82 (MSFRLSSGSR…ENEHGLLPGN (82 aa)) are head. Residues 83–118 (EKVTLQNLNDRLASYLDHVCTLEEANADLEQKIKGW) form a coil 1A region. Positions 83–398 (EKVTLQNLND…KLIDGEGRKS (316 aa)) constitute an IF rod domain. The tract at residues 119-140 (YEKYGPGSGRQLAYDCSKYFSV) is linker 1. The interval 141 to 232 (TEDLKRQIIS…KNHQEEMKVM (92 aa)) is coil 1B. The segment at 233–255 (QGAAGGNVNVEINAAPGVDLTVL) is linker 12. The interval 256–394 (LNNMRAEYED…EMYCKLIDGE (139 aa)) is coil 2. Positions 395–465 (GRKSKSTYCK…NITMEQRLPS (71 aa)) are tail. Disordered regions lie at residues 398–421 (SKSTYCKSEGRGPKNSENQVKDSK) and 450–469 (KSSKISNITMEQRLPSKVPQ). Over residues 405 to 421 (SEGRGPKNSENQVKDSK) the composition is skewed to basic and acidic residues.

It belongs to the intermediate filament family. In terms of assembly, heterotetramer of two type I and two type II keratins.

The sequence is that of Keratin, type I cytoskeletal 26 from Bos taurus (Bovine).